Here is a 244-residue protein sequence, read N- to C-terminus: uncharacterized protein (244 aa).

An N-terminal signal peptide occupies residues 1–19; it reads MRGIFFLILILNFIGLIFS. N-linked (GlcNAc...) asparagine glycosylation is found at asparagine 45 and asparagine 77. 2 ShKT domains span residues 67 to 105 and 113 to 149; these read CNNP…CGKC and CSDK…CNRC. Cystine bridges form between cysteine 113–cysteine 149, cysteine 122–cysteine 142, and cysteine 129–cysteine 146. Asparagine 152 and asparagine 158 each carry an N-linked (GlcNAc...) asparagine glycan. ShKT domains follow at residues 171–205 and 208–243; these read CTDL…CNAC and CEDA…CNIC. Disulfide bonds link cysteine 171–cysteine 205, cysteine 178–cysteine 198, cysteine 185–cysteine 202, cysteine 208–cysteine 243, cysteine 215–cysteine 236, and cysteine 224–cysteine 240.

This is an uncharacterized protein from Caenorhabditis elegans.